The primary structure comprises 170 residues: NADH-quinone oxidoreductase subunit B (170 aa).

[4Fe-4S] cluster is bound by residues cysteine 42, cysteine 43, cysteine 107, and cysteine 136.

Belongs to the complex I 20 kDa subunit family. As to quaternary structure, NDH-1 is composed of 14 different subunits. Subunits NuoB, C, D, E, F, and G constitute the peripheral sector of the complex. Requires [4Fe-4S] cluster as cofactor.

The protein localises to the cell inner membrane. The catalysed reaction is a quinone + NADH + 5 H(+)(in) = a quinol + NAD(+) + 4 H(+)(out). Functionally, NDH-1 shuttles electrons from NADH, via FMN and iron-sulfur (Fe-S) centers, to quinones in the respiratory chain. The immediate electron acceptor for the enzyme in this species is believed to be ubiquinone. Couples the redox reaction to proton translocation (for every two electrons transferred, four hydrogen ions are translocated across the cytoplasmic membrane), and thus conserves the redox energy in a proton gradient. The chain is NADH-quinone oxidoreductase subunit B from Campylobacter concisus (strain 13826).